A 494-amino-acid chain; its full sequence is Glycogen synthase (494 aa).

Residue lysine 15 coordinates ADP-alpha-D-glucose.

The protein belongs to the glycosyltransferase 1 family. Bacterial/plant glycogen synthase subfamily.

It carries out the reaction [(1-&gt;4)-alpha-D-glucosyl](n) + ADP-alpha-D-glucose = [(1-&gt;4)-alpha-D-glucosyl](n+1) + ADP + H(+). The protein operates within glycan biosynthesis; glycogen biosynthesis. Synthesizes alpha-1,4-glucan chains using ADP-glucose. This is Glycogen synthase from Albidiferax ferrireducens (strain ATCC BAA-621 / DSM 15236 / T118) (Rhodoferax ferrireducens).